Here is a 591-residue protein sequence, read N- to C-terminus: Protein misato homolog 1 (591 aa).

The protein belongs to the misato family.

The protein localises to the mitochondrion outer membrane. Its subcellular location is the cytoplasm. Involved in the regulation of mitochondrial distribution and morphology. Required for mitochondrial fusion and mitochondrial network formation. This chain is Protein misato homolog 1 (msto1), found in Danio rerio (Zebrafish).